The sequence spans 253 residues: Tryptophan synthase alpha chain (253 aa).

Catalysis depends on proton acceptor residues Glu-47 and Asp-58.

The protein belongs to the TrpA family. Tetramer of two alpha and two beta chains.

It carries out the reaction (1S,2R)-1-C-(indol-3-yl)glycerol 3-phosphate + L-serine = D-glyceraldehyde 3-phosphate + L-tryptophan + H2O. Its pathway is amino-acid biosynthesis; L-tryptophan biosynthesis; L-tryptophan from chorismate: step 5/5. In terms of biological role, the alpha subunit is responsible for the aldol cleavage of indoleglycerol phosphate to indole and glyceraldehyde 3-phosphate. The chain is Tryptophan synthase alpha chain from Lactococcus lactis subsp. cremoris (strain SK11).